Consider the following 251-residue polypeptide: Pyrroloquinoline-quinone synthase (251 aa).

Belongs to the PqqC family.

The catalysed reaction is 6-(2-amino-2-carboxyethyl)-7,8-dioxo-1,2,3,4,7,8-hexahydroquinoline-2,4-dicarboxylate + 3 O2 = pyrroloquinoline quinone + 2 H2O2 + 2 H2O + H(+). The protein operates within cofactor biosynthesis; pyrroloquinoline quinone biosynthesis. Its function is as follows. Ring cyclization and eight-electron oxidation of 3a-(2-amino-2-carboxyethyl)-4,5-dioxo-4,5,6,7,8,9-hexahydroquinoline-7,9-dicarboxylic-acid to PQQ. This is Pyrroloquinoline-quinone synthase from Pseudomonas entomophila (strain L48).